The following is a 491-amino-acid chain: Lysine--tRNA ligase 1 (491 aa).

Mg(2+) is bound by residues E400 and E407.

It belongs to the class-II aminoacyl-tRNA synthetase family. Homodimer. Requires Mg(2+) as cofactor.

The protein localises to the cytoplasm. It catalyses the reaction tRNA(Lys) + L-lysine + ATP = L-lysyl-tRNA(Lys) + AMP + diphosphate. The polypeptide is Lysine--tRNA ligase 1 (Mycoplasmopsis pulmonis (strain UAB CTIP) (Mycoplasma pulmonis)).